A 37-amino-acid chain; its full sequence is Small ribosomal subunit protein uS19 (37 aa).

This sequence belongs to the universal ribosomal protein uS19 family.

The chain is Small ribosomal subunit protein uS19 (RPS15) from Helix lucorum (Snail).